Consider the following 223-residue polypeptide: ATP phosphoribosyltransferase (223 aa).

The protein belongs to the ATP phosphoribosyltransferase family. Short subfamily. Heteromultimer composed of HisG and HisZ subunits.

The protein localises to the cytoplasm. The enzyme catalyses 1-(5-phospho-beta-D-ribosyl)-ATP + diphosphate = 5-phospho-alpha-D-ribose 1-diphosphate + ATP. Its pathway is amino-acid biosynthesis; L-histidine biosynthesis; L-histidine from 5-phospho-alpha-D-ribose 1-diphosphate: step 1/9. Functionally, catalyzes the condensation of ATP and 5-phosphoribose 1-diphosphate to form N'-(5'-phosphoribosyl)-ATP (PR-ATP). Has a crucial role in the pathway because the rate of histidine biosynthesis seems to be controlled primarily by regulation of HisG enzymatic activity. The protein is ATP phosphoribosyltransferase of Bordetella bronchiseptica (strain ATCC BAA-588 / NCTC 13252 / RB50) (Alcaligenes bronchisepticus).